A 124-amino-acid polypeptide reads, in one-letter code: MRHYEIVFIVHPDQSEQVPAMIERYKSTITSHGGQIHRVEDWGRRQLAYMIEKLAKAHYVCMNIECDQTTLDELEHAFKFNDAVLRHLIVKMKKAETGPSPMMKEVQREEAKKAAAAQPAEAQA.

A disordered region spans residues 96-124 (ETGPSPMMKEVQREEAKKAAAAQPAEAQA). Positions 114–124 (AAAAQPAEAQA) are enriched in low complexity.

This sequence belongs to the bacterial ribosomal protein bS6 family.

In terms of biological role, binds together with bS18 to 16S ribosomal RNA. This Burkholderia orbicola (strain MC0-3) protein is Small ribosomal subunit protein bS6.